A 286-amino-acid chain; its full sequence is Bifunctional protein FolD (286 aa).

Residues 165-167 (GRS) and serine 190 each bind NADP(+).

Belongs to the tetrahydrofolate dehydrogenase/cyclohydrolase family. As to quaternary structure, homodimer.

The catalysed reaction is (6R)-5,10-methylene-5,6,7,8-tetrahydrofolate + NADP(+) = (6R)-5,10-methenyltetrahydrofolate + NADPH. It catalyses the reaction (6R)-5,10-methenyltetrahydrofolate + H2O = (6R)-10-formyltetrahydrofolate + H(+). It participates in one-carbon metabolism; tetrahydrofolate interconversion. Functionally, catalyzes the oxidation of 5,10-methylenetetrahydrofolate to 5,10-methenyltetrahydrofolate and then the hydrolysis of 5,10-methenyltetrahydrofolate to 10-formyltetrahydrofolate. This is Bifunctional protein FolD from Staphylococcus epidermidis (strain ATCC 12228 / FDA PCI 1200).